Here is a 475-residue protein sequence, read N- to C-terminus: Ribulose bisphosphate carboxylase large chain (475 aa).

Positions 1 to 2 (MA) are excised as a propeptide. N-acetylproline is present on Pro3. An N6,N6,N6-trimethyllysine modification is found at Lys14. Substrate contacts are provided by Asn123 and Thr173. The Proton acceptor role is filled by Lys175. Lys177 is a substrate binding site. Mg(2+)-binding residues include Lys201, Asp203, and Glu204. Lys201 carries the post-translational modification N6-carboxylysine. Residue His294 is the Proton acceptor of the active site. Substrate contacts are provided by Arg295, His327, and Ser379.

Belongs to the RuBisCO large chain family. Type I subfamily. As to quaternary structure, heterohexadecamer of 8 large chains and 8 small chains; disulfide-linked. The disulfide link is formed within the large subunit homodimers. Requires Mg(2+) as cofactor. In terms of processing, the disulfide bond which can form in the large chain dimeric partners within the hexadecamer appears to be associated with oxidative stress and protein turnover.

The protein resides in the plastid. The protein localises to the chloroplast. It carries out the reaction 2 (2R)-3-phosphoglycerate + 2 H(+) = D-ribulose 1,5-bisphosphate + CO2 + H2O. It catalyses the reaction D-ribulose 1,5-bisphosphate + O2 = 2-phosphoglycolate + (2R)-3-phosphoglycerate + 2 H(+). Functionally, ruBisCO catalyzes two reactions: the carboxylation of D-ribulose 1,5-bisphosphate, the primary event in carbon dioxide fixation, as well as the oxidative fragmentation of the pentose substrate in the photorespiration process. Both reactions occur simultaneously and in competition at the same active site. This is Ribulose bisphosphate carboxylase large chain from Tupiella akineta (Green alga).